The chain runs to 60 residues: Toxin 5 (60 aa).

Cystine bridges form between Cys-3–Cys-22, Cys-17–Cys-39, Cys-41–Cys-52, and Cys-53–Cys-58.

This sequence belongs to the three-finger toxin family. Short-chain subfamily. Type I alpha-neurotoxin sub-subfamily. Expressed by the venom gland.

The protein localises to the secreted. Functionally, binds to muscle nicotinic acetylcholine receptor (nAChR) and inhibit acetylcholine from binding to the receptor, thereby impairing neuromuscular transmission. The sequence is that of Toxin 5 from Hydrophis schistosus (Beaked sea snake).